Reading from the N-terminus, the 419-residue chain is DNA ligase (419 aa).

The NTD stretch occupies residues 1–120 (MLSQFPGQCS…ARQKRGAHTN (120 aa)). The tract at residues 121 to 317 (RGMIPPMLVK…NYHSPHLAKL (197 aa)) is AD domain. H149, K151, E203, and F232 together coordinate ATP. The active-site N6-AMP-lysine intermediate is the K151. E203 is an a divalent metal cation binding site. E291 contacts a divalent metal cation. Residues I294 and K316 each contribute to the ATP site. Residues 318–419 (KPLLDAEFIL…REPINVLEII (102 aa)) form an OB domain region.

This sequence belongs to the ATP-dependent DNA ligase family. Requires a divalent metal cation as cofactor.

It localises to the virion. The enzyme catalyses ATP + (deoxyribonucleotide)n-3'-hydroxyl + 5'-phospho-(deoxyribonucleotide)m = (deoxyribonucleotide)n+m + AMP + diphosphate.. Its function is as follows. Very low-fidelity DNA ligase that seals nicks in double-stranded DNA during DNA repair. Together with the viral repair DNA polymerase X, fills the single nucleotide gaps generated by the AP endonuclease. It is not essential for viral replication and recombination. Displays a very low adenylation activity towards DNA with 3'-dideoxy- or 3'-amino-terminated nicks compared to regular nick DNA. The polypeptide is DNA ligase (LIG) (Ornithodoros (relapsing fever ticks)).